The chain runs to 791 residues: von Willebrand factor A domain-containing protein 2 (791 aa).

The signal sequence occupies residues 1–23 (MPPLLLLPAIYMLLFFRVSPTIS). The VWFA 1 domain maps to 51-221 (DILFLLDGSH…DATNGLLSTL (171 aa)). Residue N146 is glycosylated (N-linked (GlcNAc...) asparagine). The 38-residue stretch at 295–332 (PGPCDSQPCQNGGTCIPEGVDRYHCLCPLAFGGEVNCA) folds into the EGF-like 1 domain. Cystine bridges form between C298–C309, C303–C319, and C321–C331. 2 consecutive VWFA domains span residues 342 to 516 (DVLF…QRRL) and 530 to 704 (DLVF…IEWL). In terms of domain architecture, EGF-like 2 spans 711–747 (PVNLCKPSPCMNEGTCVLKNGSYRCECRGGWEGPHCE). Intrachain disulfides connect C715/C726, C720/C735, and C737/C746. A disordered region spans residues 762-791 (HQEPAGLQGPTPSQQAPKHLRIGKALSSAK).

Forms monomers and multimers. In terms of tissue distribution, detected in uterus, kidney, and skin. Also detected in intestine and lung of adult mice, and in calvaria, femur, brain, heart, intestine, skeletal muscle, and lung of newborn mice.

The protein resides in the secreted. The sequence is that of von Willebrand factor A domain-containing protein 2 (Vwa2) from Mus musculus (Mouse).